Reading from the N-terminus, the 644-residue chain is MGIQILPPQLANQIAAGEVVERPASVVKELVENSLDAGATRIDIEIDKGGSKLIKIRDNGSGIPKDELALALSRHATSKLHSLDDLEAILSFGFRGEALASISSVSRLTLTSRTAEQTEAWQAYAEGVDMAVKVMPAAHPVGSTIEVVDLFFNTPARRRFLKSDKTEFTHIDEWLKRIALVRGDIHFTLTHNGKTVRNYRPAMNEPQYLQRLTQVAGRQFADEALRVECQHDDLRLSGYLQSPWSTVLTDTHYFYVNGRLVRDRLVNHAVRQAFAQKAEVEQPGYVLMLDIDPHQVDVNVHPAKHEVRFHQSRYVHDYILQALQSALEEAGELGFEHPFEPSSPQVRDEVSLSESGTQTQTEHHAFELQSPESKTHSTWNEASRVDTSRVEISRDSQLTERTRDIASARPYSGVQSNAYGSMAVPRESRSGPTGESRARAELPSKAAIASYGELLQTPSYSVQDKPYQPVLAMPAMLNGQYWVLAQGQNLSLLPIQSVALATRSHEIETKLATGLIGQPLLMPVSIAADTDWPALLEEHETLIRQLGLELTIRYQQLIIKKVPPYLRDSQLAKVIPEWLQSLRFEAPAPNALAVWLAEQSLTGFTSAADIWAAYSQLTEEKRQQIADKAVSLPWQSWLEEQAIE.

2 disordered regions span residues 353 to 399 and 420 to 440; these read SESG…SQLT and GSMA…RARA. A compositionally biased stretch (polar residues) spans 370–381; that stretch reads SPESKTHSTWNE. Residues 383-399 are compositionally biased toward basic and acidic residues; the sequence is SRVDTSRVEISRDSQLT.

Belongs to the DNA mismatch repair MutL/HexB family.

In terms of biological role, this protein is involved in the repair of mismatches in DNA. It is required for dam-dependent methyl-directed DNA mismatch repair. May act as a 'molecular matchmaker', a protein that promotes the formation of a stable complex between two or more DNA-binding proteins in an ATP-dependent manner without itself being part of a final effector complex. The protein is DNA mismatch repair protein MutL of Shewanella sp. (strain MR-4).